The chain runs to 1085 residues: MAPRVAPGGSQQFLGKQGLKAKNPVSTPNSHFRSASNPRKRREPPTIDTGYPDRSDTNSPTDHALHDENETNINVVVRVRGRTDQEVRDNSSLAVSTSGAMGAELAIQSDPSSMLVTKTYAFDKVFGPEADQLMLFENSVAPMLEQVLNGYNCTIFAYGQTGTGKTYTMSGDLSDSDGILSEGAGLIPRALYQLFSSLDNSNQEYAVKCSYYELYNEEIRDLLVSEELRKPARVFEDTSRRGNVVITGIEESYIKNAGDGLRLLREGSHRRQVAATKCNDLSSRSHSIFTITLHRKVSSGMTDETNSLTINNNSDDLLRASKLHMVDLAGSENIGRSGAENKRARETGMINQSLLTLGRVINALVEKAHHIPYRESKLTRLLQDSLGGKTKTSMIVTVSSTNTNLEETISTLEYAARAKSIRNKPQNNQLVFRKVLIKDLVLDIERLKNDLNATRKKNGVYLAESTYKELMDRVQNKDLLCQEQARKLEVLDLNVKSSREQLQYVSKSNQEHKKEVEALQLQLVNSSTELESVKSENEKLKNELVLEIEKRKKYETNEAKITTVATDLSQYYRESKEYIASLYEKLDRTERNNKENENNFWNLKFNLLTMLRSFHGSFTDETNGYFTLLNDFNASMEELLNTHSNQLLISMTKITEHFQSLDEALQSARSSCAVPNSSLDLIVSELKDSKNSLLDALEHSLQDISMSSQKLGNGISSELIELQKDMKESYRQLVQELRSLYNLQHTHEESQKELMYGVRNDIDALVKTCTTSLNDADIILSDYISDQKSKFESKQQDLIANIGKIVSNFLQEQNESLYTKADILHSHLNDTNSNIRKANEIMNNRSEEFLRNAASQAEIVGANKERIQKTVENGSQLLDSKSKAIHSNSRSMYDHCLALAESQKQGVNLEVQTLDRLLQKVKEHSEDNTKEKHQQLLDLLESLVGNNDNLIDSIKTPHTELQKITDHVLKGTTSLANHTNELLGLGDESLCNLETTIEDTSLVKLETTGDTPSKRELPATPSWTRDSSLIKETTNLNLDSDKKFVRETYTSSNQTNEPDVYDKPSNSSRTSLLRSSRSAYSKMKR.

Residues 1-70 form a disordered region; sequence MAPRVAPGGS…TDHALHDENE (70 aa). A compositionally biased stretch (polar residues) spans 24-37; the sequence is PVSTPNSHFRSASN. One can recognise a Kinesin motor domain in the interval 72-421; sequence NINVVVRVRG…LEYAARAKSI (350 aa). 159–166 contributes to the ATP binding site; the sequence is GQTGTGKT. Coiled coils occupy residues 436-604, 715-740, and 897-955; these read LIKD…WNLK, ISSE…LRSL, and LALA…DSIK. 2 repeats span residues 987 to 998 and 999 to 1010; these read DESLCNLETTIE and DTSLVKLETTGD. Thr1011 carries the post-translational modification Phosphothreonine; by CDC2. Residues 1049–1085 form a disordered region; the sequence is YTSSNQTNEPDVYDKPSNSSRTSLLRSSRSAYSKMKR. Low complexity predominate over residues 1065–1078; sequence SNSSRTSLLRSSRS.

This sequence belongs to the TRAFAC class myosin-kinesin ATPase superfamily. Kinesin family. BimC subfamily.

The protein resides in the cytoplasm. Its subcellular location is the cytoskeleton. It is found in the microtubule organizing center. The protein localises to the spindle pole body. Functionally, could be a spindle pole body motor. On transition from G2 to M phase of the cell cycle, the spindle pole body duplicates; the daughter pole bodies seed microtubules which interdigitate to form a short spindle that elongates to span the nucleus at metaphase. Mutations at cut7 block spindle formation. This is Kinesin-like protein cut7 (cut7) from Schizosaccharomyces pombe (strain 972 / ATCC 24843) (Fission yeast).